We begin with the raw amino-acid sequence, 492 residues long: Pentatricopeptide repeat-containing protein At4g21705, mitochondrial (492 aa).

A mitochondrion-targeting transit peptide spans 1 to 17 (MNILRRIPANLIASRYY). 8 PPR repeats span residues 125–159 (NDKTYGALLNCYVRQQNVEKSLLHFEKMKEMGFVT), 160–194 (SSLTYNNIMCLYTNIGQHEKVPKVLEEMKEENVAP), 195–225 (DNYSYRICINAFGAMYDLERIGGTLRDMERR), 231–261 (DWNTYAVAAKFYIDGGDCDRAVELLKMSENR), 266–296 (DGEGYNHLITLYARLGKKIEVLRLWDLEKDV), 301–335 (INQDYLTVLQSLVKIDALVEAEEVLTEWKSSGNCY), 336–370 (DFRVPNTVIRGYIGKSMEEKAEAMLEDLARRGKAT), and 371–405 (TPESWELVATAYAEKGTLENAFKCMKTALGVEVGS).

The protein belongs to the PPR family. P subfamily.

It is found in the mitochondrion. The protein is Pentatricopeptide repeat-containing protein At4g21705, mitochondrial of Arabidopsis thaliana (Mouse-ear cress).